Here is a 565-residue protein sequence, read N- to C-terminus: Sulfite reductase [NADPH] hemoprotein beta-component (565 aa).

[4Fe-4S] cluster-binding residues include Cys-429, Cys-435, Cys-474, and Cys-478. Siroheme is bound at residue Cys-478.

This sequence belongs to the nitrite and sulfite reductase 4Fe-4S domain family. As to quaternary structure, alpha(8)-beta(8). The alpha component is a flavoprotein, the beta component is a hemoprotein. The cofactor is siroheme. [4Fe-4S] cluster serves as cofactor.

It catalyses the reaction hydrogen sulfide + 3 NADP(+) + 3 H2O = sulfite + 3 NADPH + 4 H(+). Its pathway is sulfur metabolism; hydrogen sulfide biosynthesis; hydrogen sulfide from sulfite (NADPH route): step 1/1. Component of the sulfite reductase complex that catalyzes the 6-electron reduction of sulfite to sulfide. This is one of several activities required for the biosynthesis of L-cysteine from sulfate. In Shewanella oneidensis (strain ATCC 700550 / JCM 31522 / CIP 106686 / LMG 19005 / NCIMB 14063 / MR-1), this protein is Sulfite reductase [NADPH] hemoprotein beta-component.